Reading from the N-terminus, the 425-residue chain is MREQDFLNHFLKKGYFKKHAKAVLALSGGLDSMFLFKVLSTYQKELEIELILAHVNHKQRIESDWEEKELRKLAAEAELPIYISNFSGEFSEARARNFRYDFFQEVMKKTGATALVTAHHADDQVETILMRLIRGTRLRYLSGIKEKQVVGEIEIIRPFLHFQKKDFPSIFHFEDTSNQENHYFRNRIRNSYLPELEKENPRFRDAILGIGNEILDYDLAIAELSNNIDVENLQQLFSYSESTQRVLLQTYLNRFPDLNLTKAQFAEVQQILKSKSQYRHPIKNGYELIKEYQQFQICKISPQADEKEDELVLHYQNQVAYQGYLFSFGLPLEGELIQQIPVSRETSIHIRHRKTGDVLIQNGHRKKLRRLFIDLKIPMEKRNSALIIEQFGEIVSILGIATNNLSKKTKNDIMNTVLYIEKIDR.

27–32 is a binding site for ATP; sequence SGGLDS.

This sequence belongs to the tRNA(Ile)-lysidine synthase family.

Its subcellular location is the cytoplasm. It carries out the reaction cytidine(34) in tRNA(Ile2) + L-lysine + ATP = lysidine(34) in tRNA(Ile2) + AMP + diphosphate + H(+). Its function is as follows. Ligates lysine onto the cytidine present at position 34 of the AUA codon-specific tRNA(Ile) that contains the anticodon CAU, in an ATP-dependent manner. Cytidine is converted to lysidine, thus changing the amino acid specificity of the tRNA from methionine to isoleucine. This is tRNA(Ile)-lysidine synthase from Streptococcus pneumoniae serotype 19F (strain G54).